The following is a 256-amino-acid chain: Cilia- and flagella-associated protein 410 (256 aa).

3 LRR repeats span residues 19-40 (SVRKLNCWGSRLTDISICQEMP), 41-62 (SLEVITLSVNSISTLEPVSRCQ), and 63-84 (RLSELYLRRNRIPSLAELFYLK). Positions 97-137 (NPCCGTSPHRYRMTVLRTLPRLQKLDNQAVTEEELSRALSE) constitute an LRRCT domain. 2 disordered regions span residues 129 to 156 (EELSRALSEGEEITAAPEREGTGHGGPK) and 168 to 212 (AETG…SSHR). A phosphoserine mark is found at Ser136 and Ser177.

Found in a complex with CFAP410, NEK1 and SPATA7. Interacts with NEK1. Widely expressed. Expressed in the retina.

It is found in the mitochondrion. The protein resides in the cytoplasm. It localises to the cytoskeleton. Its subcellular location is the cilium basal body. The protein localises to the cell projection. It is found in the cilium. The protein resides in the photoreceptor outer segment. Functionally, plays a role in cilia formation and/or maintenance. Plays a role in the regulation of cell morphology and cytoskeletal organization. Involved in DNA damage repair. The polypeptide is Cilia- and flagella-associated protein 410 (Homo sapiens (Human)).